We begin with the raw amino-acid sequence, 219 residues long: 2-hydroxy-3-keto-5-methylthiopentenyl-1-phosphate phosphatase (219 aa).

It belongs to the HAD-like hydrolase superfamily. MtnX family.

It carries out the reaction 2-hydroxy-5-methylsulfanyl-3-oxopent-1-enyl phosphate + H2O = 1,2-dihydroxy-5-(methylsulfanyl)pent-1-en-3-one + phosphate. It participates in amino-acid biosynthesis; L-methionine biosynthesis via salvage pathway; L-methionine from S-methyl-5-thio-alpha-D-ribose 1-phosphate: step 4/6. Dephosphorylates 2-hydroxy-3-keto-5-methylthiopentenyl-1-phosphate (HK-MTPenyl-1-P) yielding 1,2-dihydroxy-3-keto-5-methylthiopentene (DHK-MTPene). This Bacillus cereus (strain ATCC 10987 / NRS 248) protein is 2-hydroxy-3-keto-5-methylthiopentenyl-1-phosphate phosphatase.